Here is a 535-residue protein sequence, read N- to C-terminus: Sterol 26-hydroxylase, mitochondrial (535 aa).

The transit peptide at 1 to 36 (MAALGCARLRWALLGPRVAGCGLCPQGARAKAAIPT) directs the protein to the mitochondrion. Position 286 is an N6-acetyllysine (Lys286). The sterol-binding stretch occupies residues 387 to 401 (PLLKAVLKETLRLYP). Position 480 (Cys480) interacts with heme. Lys524 carries the post-translational modification N6-acetyllysine.

Belongs to the cytochrome P450 family. As to quaternary structure, interacts with HSP70; this interaction is required for initial targeting to mitochondria. The cofactor is heme. As to expression, expressed in all tissues tested. Highest expression in liver and duodenum, followed by adrenal gland and lung. Low expression in kidney and spleen.

It localises to the mitochondrion inner membrane. It catalyses the reaction 5beta-cholestane-3alpha,7alpha,12alpha-triol + 6 reduced [adrenodoxin] + 3 O2 + 5 H(+) = (25R)-3alpha,7alpha,12alpha-trihydroxy-5beta-cholestan-26-oate + 6 oxidized [adrenodoxin] + 4 H2O. The enzyme catalyses cholestanol + 2 reduced [adrenodoxin] + O2 + 2 H(+) = (25R)-26-hydroxycholestanol + 2 oxidized [adrenodoxin] + H2O. It carries out the reaction (25R)-3beta-hydroxycholest-5-en-7-one-26-al + 2 reduced [adrenodoxin] + O2 + H(+) = (25R)-3beta-hydroxycholest-5-en-7-one-26-oate + 2 oxidized [adrenodoxin] + H2O. The catalysed reaction is (25R)-3beta,26-dihydroxycholest-5-en-7-one + 2 reduced [adrenodoxin] + O2 + 2 H(+) = (25R)-3beta-hydroxycholest-5-en-7-one-26-al + 2 oxidized [adrenodoxin] + 2 H2O. It catalyses the reaction 7-oxocholesterol + 2 reduced [adrenodoxin] + O2 + 2 H(+) = (25R)-3beta,26-dihydroxycholest-5-en-7-one + 2 oxidized [adrenodoxin] + H2O. The enzyme catalyses calciol + 2 reduced [adrenodoxin] + O2 + 2 H(+) = calcidiol + 2 oxidized [adrenodoxin] + H2O. It carries out the reaction (25R)-5beta-cholestane-3alpha,7alpha,12alpha,26-tetrol + 2 reduced [adrenodoxin] + O2 + 2 H(+) = (25R)-3alpha,7alpha,12alpha-trihydroxy-5beta-cholestan-26-al + 2 oxidized [adrenodoxin] + 2 H2O. The catalysed reaction is 2 reduced [adrenodoxin] + cholesterol + O2 + 2 H(+) = (25R)-cholest-5-ene-3beta,26-diol + 2 oxidized [adrenodoxin] + H2O. It catalyses the reaction (25R)-3beta,4beta-dihydroxycholest-5-en-26-al + 2 reduced [adrenodoxin] + O2 + H(+) = (25R)-3beta,4beta-dihydroxycholest-5-en-26-oate + 2 oxidized [adrenodoxin] + H2O. The enzyme catalyses (25R)-4beta,26-dihydroxycholesterol + 2 reduced [adrenodoxin] + O2 + 2 H(+) = (25R)-3beta,4beta-dihydroxycholest-5-en-26-al + 2 oxidized [adrenodoxin] + 2 H2O. It carries out the reaction 4beta-hydroxycholesterol + 2 reduced [adrenodoxin] + O2 + 2 H(+) = (25R)-4beta,26-dihydroxycholesterol + 2 oxidized [adrenodoxin] + H2O. The catalysed reaction is (25R)-3beta-hydroxy-5-cholesten-26-al + 2 reduced [adrenodoxin] + O2 + H(+) = (25R)-3beta-hydroxy-5-cholestenoate + 2 oxidized [adrenodoxin] + H2O. It catalyses the reaction (25R)-cholest-5-ene-3beta,26-diol + 2 reduced [adrenodoxin] + O2 + 2 H(+) = (25R)-3beta-hydroxy-5-cholesten-26-al + 2 oxidized [adrenodoxin] + 2 H2O. The enzyme catalyses (25R)-3alpha,7alpha,12alpha-trihydroxy-5beta-cholestan-26-al + 2 reduced [adrenodoxin] + O2 + H(+) = (25R)-3alpha,7alpha,12alpha-trihydroxy-5beta-cholestan-26-oate + 2 oxidized [adrenodoxin] + H2O. It carries out the reaction 5beta-cholestane-3alpha,7alpha,12alpha-triol + 2 reduced [adrenodoxin] + O2 + 2 H(+) = (25R)-5beta-cholestane-3alpha,7alpha,12alpha,26-tetrol + 2 oxidized [adrenodoxin] + H2O. Its pathway is hormone biosynthesis; cholecalciferol biosynthesis. It participates in steroid metabolism; cholesterol degradation. The protein operates within lipid metabolism; bile acid biosynthesis. In terms of biological role, cytochrome P450 monooxygenase that catalyzes regio- and stereospecific hydroxylation of cholesterol and its derivatives. Hydroxylates (with R stereochemistry) the terminal methyl group of cholesterol side-chain in a three step reaction to yield at first a C26 alcohol, then a C26 aldehyde and finally a C26 acid. Regulates cholesterol homeostasis by catalyzing the conversion of excess cholesterol to bile acids via both the 'neutral' (classic) and the 'acid' (alternative) pathways. May also regulate cholesterol homeostasis via generation of active oxysterols, which act as ligands for NR1H2 and NR1H3 nuclear receptors, modulating the transcription of genes involved in lipid metabolism. Plays a role in cholestanol metabolism in the cerebellum. Similarly to cholesterol, hydroxylates cholestanol and may facilitate sterol diffusion through the blood-brain barrier to the systemic circulation for further degradation. Also hydroxylates retinal 7-ketocholesterol, a noxious oxysterol with pro-inflammatory and pro-apoptotic effects, and may play a role in its elimination from the retinal pigment epithelium. May play a redundant role in vitamin D biosynthesis. Catalyzes 25-hydroxylation of vitamin D3 that is required for its conversion to a functionally active form. This chain is Sterol 26-hydroxylase, mitochondrial (CYP27A1), found in Oryctolagus cuniculus (Rabbit).